Reading from the N-terminus, the 102-residue chain is Large ribosomal subunit protein uL24c (102 aa).

It belongs to the universal ribosomal protein uL24 family. As to quaternary structure, part of the 50S ribosomal subunit.

The protein resides in the plastid. It localises to the chloroplast. Functionally, one of two assembly initiator proteins, it binds directly to the 5'-end of the 23S rRNA, where it nucleates assembly of the 50S subunit. The chain is Large ribosomal subunit protein uL24c (rpl24) from Rhodomonas salina (Cryptomonas salina).